We begin with the raw amino-acid sequence, 188 residues long: Adenine phosphoribosyltransferase (188 aa).

It belongs to the purine/pyrimidine phosphoribosyltransferase family. In terms of assembly, homodimer.

The protein resides in the cytoplasm. The catalysed reaction is AMP + diphosphate = 5-phospho-alpha-D-ribose 1-diphosphate + adenine. It participates in purine metabolism; AMP biosynthesis via salvage pathway; AMP from adenine: step 1/1. Catalyzes a salvage reaction resulting in the formation of AMP, that is energically less costly than de novo synthesis. In Neisseria meningitidis serogroup B (strain ATCC BAA-335 / MC58), this protein is Adenine phosphoribosyltransferase.